A 272-amino-acid polypeptide reads, in one-letter code: MIKTKIMGILNVTPDSFSDGGQYHSVDQAVKRAKEMIDEGVDIIDVGGVSTRPGHKEVSHKEVSLKEEMNRVLPVVESIVKYDVQISVDTFRSEVAEACLKLGVSMINDQWAGLFDSNMFNVVSQYGAEIVLMHNGDGHRDKPVVEEMLVSLLAQANKAELAGIPHNKIWLDPGIGFAKTREEENEVMARLDELVATEYPVLLATSRKRYIKEMMNQDSSPSDRDEATAATTAYGIMKGVRGVRVHNVLLNTRLAQSMDFLKENEYERHHLS.

The 251-residue stretch at 1–251 folds into the Pterin-binding domain; the sequence is MIKTKIMGIL…GVRVHNVLLN (251 aa). Residue Asn-11 participates in Mg(2+) binding. Residues Thr-51, Asp-89, Asn-108, Asp-172, Lys-208, and 244–246 contribute to the (7,8-dihydropterin-6-yl)methyl diphosphate site; that span reads RVH.

The protein belongs to the DHPS family. As to quaternary structure, homodimer. Mg(2+) is required as a cofactor.

It catalyses the reaction (7,8-dihydropterin-6-yl)methyl diphosphate + 4-aminobenzoate = 7,8-dihydropteroate + diphosphate. It participates in cofactor biosynthesis; tetrahydrofolate biosynthesis; 7,8-dihydrofolate from 2-amino-4-hydroxy-6-hydroxymethyl-7,8-dihydropteridine diphosphate and 4-aminobenzoate: step 1/2. Catalyzes the condensation of para-aminobenzoate (pABA) with 6-hydroxymethyl-7,8-dihydropterin diphosphate (DHPt-PP) to form 7,8-dihydropteroate (H2Pte), the immediate precursor of folate derivatives. This chain is Dihydropteroate synthase (folP), found in Staphylococcus epidermidis (strain ATCC 35984 / DSM 28319 / BCRC 17069 / CCUG 31568 / BM 3577 / RP62A).